A 739-amino-acid chain; its full sequence is Lysyl oxidase homolog 3A (739 aa).

Positions 1 to 25 are cleaved as a signal peptide; it reads MLRSELRDMVVAMVLWGILLPFCLS. SRCR domains follow at residues 38-139, 166-272, 293-393, and 403-511; these read FRLA…VICK, LRPL…VSCV, MRLK…VICN, and MRLT…VICS. Cystine bridges form between Cys64–Cys128, Cys77–Cys138, Cys108–Cys118, Cys196–Cys261, Cys209–Cys271, Cys238–Cys248, Cys318–Cys382, Cys331–Cys392, Cys362–Cys372, Cys433–Cys497, Cys446–Cys510, and Cys479–Cys489. An N-linked (GlcNAc...) asparagine glycan is attached at Asn256. Residue Asn468 is glycosylated (N-linked (GlcNAc...) asparagine). Residue Asn611 is glycosylated (N-linked (GlcNAc...) asparagine). Positions 620–656 form a cross-link, lysine tyrosylquinone (Lys-Tyr); sequence KASFCLEDTECHEGVSKRYECANFGEQGITVGCWDLY. Tyr656 carries the 2',4',5'-topaquinone modification.

This sequence belongs to the lysyl oxidase family. Requires Cu cation as cofactor. The cofactor is lysine tyrosylquinone residue. Post-translationally, the lysine tyrosylquinone cross-link (LTQ) is generated by condensation of the epsilon-amino group of a lysine with a topaquinone produced by oxidation of tyrosine.

The protein resides in the secreted. Its subcellular location is the extracellular space. It is found in the cytoplasm. The protein localises to the nucleus. The enzyme catalyses L-lysyl-[protein] + O2 + H2O = (S)-2-amino-6-oxohexanoyl-[protein] + H2O2 + NH4(+). It catalyses the reaction N(6)-acetyl-L-lysyl-[protein] + O2 + H2O = acetamide + (S)-2-amino-6-oxohexanoyl-[protein] + H2O2. In terms of biological role, protein-lysine 6-oxidase that mediates the oxidation of peptidyl lysine residues to allysine in target proteins. Catalyzes the post-translational oxidative deamination of peptidyl lysine residues in precursors of elastin and different types of collagens, a prerequisite in the formation of cross-links between collagens and elastin. Can mediate oxidation of lysine residues that are acetylated. Also able to catalyze deacetylation of lysine residues. The polypeptide is Lysyl oxidase homolog 3A (Danio rerio (Zebrafish)).